The following is a 449-amino-acid chain: Glycine--tRNA ligase (449 aa).

Positions 100 and 158 each coordinate substrate. ATP is bound by residues 190-192 (RNE), 200-205 (FRVREF), 275-276 (EL), and 319-322 (GIER). Residue 205 to 209 (FEQFE) participates in substrate binding. Substrate is bound at residue 315-319 (EPSVG).

It belongs to the class-II aminoacyl-tRNA synthetase family. In terms of assembly, homodimer.

Its subcellular location is the cytoplasm. It carries out the reaction tRNA(Gly) + glycine + ATP = glycyl-tRNA(Gly) + AMP + diphosphate. In terms of biological role, catalyzes the attachment of glycine to tRNA(Gly). This chain is Glycine--tRNA ligase, found in Mycoplasma pneumoniae (strain ATCC 29342 / M129 / Subtype 1) (Mycoplasmoides pneumoniae).